We begin with the raw amino-acid sequence, 500 residues long: L-arabinose isomerase (500 aa).

Mn(2+) is bound by residues E306, E333, H349, and H448.

The protein belongs to the arabinose isomerase family. It depends on Mn(2+) as a cofactor.

The catalysed reaction is beta-L-arabinopyranose = L-ribulose. It functions in the pathway carbohydrate degradation; L-arabinose degradation via L-ribulose; D-xylulose 5-phosphate from L-arabinose (bacterial route): step 1/3. In terms of biological role, catalyzes the conversion of L-arabinose to L-ribulose. The protein is L-arabinose isomerase of Koribacter versatilis (strain Ellin345).